A 496-amino-acid chain; its full sequence is KYHNPHFIGNRSVITHLMEWKYDDIGDECERFLGPYGYGGVQVSPVNEHAILDRRPWYERYQPVSYDIRTRSGDEQQFRRMVKRCNKAGVRIYVDIVLNHMTGAQSGKGTNGHHYDGNTLQYPGVPFGPNDFHGHESCPTQDLEIHDYTNPKEARNCRLSGLRDLKQQSEYVRQKQVDFLNHLIDIGVAGFRSDASTHQWPDDLRSIYSRLHNLNKEFFPENSQPFIYHETIYYGGNGINSNEYTSLGRIIEFRFYKEITNVFRGNNPLHWLKNFGTEWGLVPSGDALVMIDSHDLRVGHTGKLGFNINCFEGRLLKAATAFMLAWNYGVPRVMSSYFWNQIIKDGKDVNDWVGPPSDKNGNILSVHPNPDMTCNHEWICEHRWREIYNMVKFRMIAGQEPVHNWWDNGDYQIAFSRGNRAFIAINLQKNQQNLQQKLHTGLPAGTYCDIISGNLIDNKCTGKSIHVDKNGQADVYVGHDEFDAFVAYHIGARIVS.

An intrachain disulfide couples Cys-29 to Cys-85. 3 residues coordinate Ca(2+): Asn-99, Arg-155, and Asp-164. Residue Arg-192 coordinates chloride. Catalysis depends on Asp-194, which acts as the Nucleophile. His-198 is a Ca(2+) binding site. Glu-230 functions as the Proton donor in the catalytic mechanism. Arg-332 contacts chloride. Cystine bridges form between Cys-374-Cys-380 and Cys-448-Cys-460.

The protein belongs to the glycosyl hydrolase 13 family. As to quaternary structure, monomer. Ca(2+) serves as cofactor. The cofactor is chloride. Disulfide bonds are present.

The protein localises to the secreted. The catalysed reaction is Endohydrolysis of (1-&gt;4)-alpha-D-glucosidic linkages in polysaccharides containing three or more (1-&gt;4)-alpha-linked D-glucose units.. Inhibited by alpha-amylase inhibitors from wheat and rye. The most effective inhibitors are the wheat tetrameric alpha-amylase inhibitor (WTAI) and the rye dimeric alpha-amylase inhibitor (RDAI-1). Not inhibited by alpha-amylase inhibitor from barley. Aids in the digestion of starch and glycogen derived from food, such as skin scales, fungi and bacteria. This Dermatophagoides pteronyssinus (European house dust mite) protein is Alpha-amylase.